A 398-amino-acid chain; its full sequence is Acetate kinase (398 aa).

N9 is a Mg(2+) binding site. K16 contacts ATP. R90 is a binding site for substrate. D147 acts as the Proton donor/acceptor in catalysis. Residues 207–211, 282–284, and 330–334 contribute to the ATP site; these read HIGNG, DLR, and GVGEN. E384 provides a ligand contact to Mg(2+).

Belongs to the acetokinase family. In terms of assembly, homodimer. Mg(2+) is required as a cofactor. The cofactor is Mn(2+).

Its subcellular location is the cytoplasm. The catalysed reaction is acetate + ATP = acetyl phosphate + ADP. It functions in the pathway metabolic intermediate biosynthesis; acetyl-CoA biosynthesis; acetyl-CoA from acetate: step 1/2. Catalyzes the formation of acetyl phosphate from acetate and ATP. Can also catalyze the reverse reaction. The sequence is that of Acetate kinase from Staphylococcus carnosus (strain TM300).